The following is a 396-amino-acid chain: MASSAQDGNNPLFSPYKMGKFNLSHRVVLAPMTRCRALNNIPQAALGEYYEQRATAGGFLITEGTMISPTSAGFPHVPGIFTKEQVREWKKIVDVVHAKGAVIFCQLWHVGRASHEVYQPAGAAPISSTEKPISNRWRILMPDGTHGIYPKPRAIGTYEISQVVEDYRRSALNAIEAGFDGIEIHGAHGYLIDQFLKDGINDRTDEYGGSLANRCKFITQVVQAVVSAIGADRVGVRVSPAIDHLDAMDSNPLSLGLAVVERLNKIQLHSGSKLAYLHVTQPRYVAYGQTEAGRLGSEEEEARLMRTLRNAYQGTFICSGGYTRELGIEAVAQGDADLVSYGRLFISNPDLVMRIKLNAPLNKYNRKTFYTQDPVVGYTDYPFLQGNGSNGPLSRL.

Residues 31-33 (PMT), Gly64, and Gln106 each bind FMN. Position 185–188 (185–188 (HGAH)) interacts with substrate. Tyr190 functions as the Proton donor in the catalytic mechanism. Arg237 is an FMN binding site. Arg283 contacts substrate. FMN is bound by residues Gly321 and 342 to 343 (GR). Residues 342 to 343 (GR) are FMN. A Microbody targeting signal motif is present at residues 394–396 (SRL).

The protein belongs to the NADH:flavin oxidoreductase/NADH oxidase family. FMN serves as cofactor. As to expression, expressed in roots and to a lower extent in leaves and flowers.

The protein localises to the peroxisome. It carries out the reaction (1S,2S)-OPC-8 + NADP(+) = (9S,13S,15Z)-12-oxophyto-10,15-dienoate + NADPH + H(+). It functions in the pathway lipid metabolism; oxylipin biosynthesis. In terms of biological role, specifically cleaves olefinic bonds in cyclic enones. Involved in the biosynthesis of jasmonic acid (JA) and perhaps in biosynthesis or metabolism of other oxylipin signaling moleclules. It is required for the spatial and temporal regulation of JA levels during dehiscence of anthers, promoting the stomium degeneration program. In vitro, reduces 9S,13S-12-oxophytodienoic acid (9S,13S-OPDA) and 9R,13R-OPDA to 9S,13S-OPC-8:0 and 9R,13R-OPC-8:0, respectively. This Solanum lycopersicum (Tomato) protein is 12-oxophytodienoate reductase 3 (OPR3).